The sequence spans 161 residues: Endoribonuclease YbeY (161 aa).

Positions 121, 125, and 131 each coordinate Zn(2+).

It belongs to the endoribonuclease YbeY family. Zn(2+) is required as a cofactor.

It is found in the cytoplasm. Single strand-specific metallo-endoribonuclease involved in late-stage 70S ribosome quality control and in maturation of the 3' terminus of the 16S rRNA. The protein is Endoribonuclease YbeY of Bordetella avium (strain 197N).